A 311-amino-acid polypeptide reads, in one-letter code: Thioredoxin reductase (311 aa).

Residues 15–18 (SGPA), 37–44 (EGTQFGGA), N53, and V86 contribute to the FAD site. A disulfide bond links C137 and C140. NADP(+) is bound by residues S158, H177, R183, I240, and Y260. FAD is bound by residues D280 and 287–290 (RQAI). R287 contributes to the NADP(+) binding site.

Belongs to the class-II pyridine nucleotide-disulfide oxidoreductase family. Homodimer. It depends on FAD as a cofactor.

It localises to the cytoplasm. The catalysed reaction is [thioredoxin]-dithiol + NADP(+) = [thioredoxin]-disulfide + NADPH + H(+). This is Thioredoxin reductase from Mycolicibacterium smegmatis (Mycobacterium smegmatis).